Reading from the N-terminus, the 393-residue chain is NAD(P)H-quinone oxidoreductase subunit H, chloroplastic (393 aa).

This sequence belongs to the complex I 49 kDa subunit family. In terms of assembly, NDH is composed of at least 16 different subunits, 5 of which are encoded in the nucleus.

It localises to the plastid. It is found in the chloroplast thylakoid membrane. It carries out the reaction a plastoquinone + NADH + (n+1) H(+)(in) = a plastoquinol + NAD(+) + n H(+)(out). It catalyses the reaction a plastoquinone + NADPH + (n+1) H(+)(in) = a plastoquinol + NADP(+) + n H(+)(out). NDH shuttles electrons from NAD(P)H:plastoquinone, via FMN and iron-sulfur (Fe-S) centers, to quinones in the photosynthetic chain and possibly in a chloroplast respiratory chain. The immediate electron acceptor for the enzyme in this species is believed to be plastoquinone. Couples the redox reaction to proton translocation, and thus conserves the redox energy in a proton gradient. The chain is NAD(P)H-quinone oxidoreductase subunit H, chloroplastic from Acorus calamus var. americanus (American sweet flag).